A 136-amino-acid chain; its full sequence is Large ribosomal subunit protein uL16c (136 aa).

This sequence belongs to the universal ribosomal protein uL16 family. Part of the 50S ribosomal subunit.

The protein localises to the plastid. Its subcellular location is the chloroplast. This Illicium oligandrum (Star anise) protein is Large ribosomal subunit protein uL16c.